The following is a 144-amino-acid chain: Large ribosomal subunit protein uL15 (144 aa).

Over residues 1 to 14 (MVVRREKKSRKMRG) the composition is skewed to basic residues. Residues 1-35 (MVVRREKKSRKMRGSRTMGWGIRGQHRDRGSQGGR) are disordered.

The protein belongs to the universal ribosomal protein uL15 family. Part of the 50S ribosomal subunit.

Binds to the 23S rRNA. The protein is Large ribosomal subunit protein uL15 of Saccharolobus solfataricus (strain ATCC 35092 / DSM 1617 / JCM 11322 / P2) (Sulfolobus solfataricus).